The primary structure comprises 475 residues: Pyruvate kinase (475 aa).

Arg-36 is a binding site for substrate. K(+) is bound by residues Asn-38, Ser-40, and Asp-70. Position 38-41 (38-41) interacts with ATP; that stretch reads NFSH. 2 residues coordinate ATP: Arg-77 and Lys-158. Glu-223 contacts Mg(2+). Substrate-binding residues include Gly-246, Asp-247, and Thr-279. Asp-247 lines the Mg(2+) pocket.

The protein belongs to the pyruvate kinase family. Homotetramer. It depends on a divalent metal cation as a cofactor.

It catalyses the reaction pyruvate + ATP = phosphoenolpyruvate + ADP + H(+). Its pathway is carbohydrate degradation; glycolysis; pyruvate from D-glyceraldehyde 3-phosphate: step 5/5. The protein is Pyruvate kinase (pki) of Thermococcus litoralis (strain ATCC 51850 / DSM 5473 / JCM 8560 / NS-C).